The chain runs to 491 residues: Aspartyl/glutamyl-tRNA(Asn/Gln) amidotransferase subunit B (491 aa).

Belongs to the GatB/GatE family. GatB subfamily. As to quaternary structure, heterotrimer of A, B and C subunits.

The enzyme catalyses L-glutamyl-tRNA(Gln) + L-glutamine + ATP + H2O = L-glutaminyl-tRNA(Gln) + L-glutamate + ADP + phosphate + H(+). It carries out the reaction L-aspartyl-tRNA(Asn) + L-glutamine + ATP + H2O = L-asparaginyl-tRNA(Asn) + L-glutamate + ADP + phosphate + 2 H(+). Allows the formation of correctly charged Asn-tRNA(Asn) or Gln-tRNA(Gln) through the transamidation of misacylated Asp-tRNA(Asn) or Glu-tRNA(Gln) in organisms which lack either or both of asparaginyl-tRNA or glutaminyl-tRNA synthetases. The reaction takes place in the presence of glutamine and ATP through an activated phospho-Asp-tRNA(Asn) or phospho-Glu-tRNA(Gln). In Burkholderia multivorans (strain ATCC 17616 / 249), this protein is Aspartyl/glutamyl-tRNA(Asn/Gln) amidotransferase subunit B.